We begin with the raw amino-acid sequence, 338 residues long: Ketol-acid reductoisomerase (NADP(+)) (338 aa).

One can recognise a KARI N-terminal Rossmann domain in the interval 1-181; it reads MKVFYDKDAD…GGGRAGIIET (181 aa). NADP(+) contacts are provided by residues 24-27, arginine 47, and serine 52; that span reads YGSQ. The active site involves histidine 107. Glycine 133 lines the NADP(+) pocket. A KARI C-terminal knotted domain is found at 182–327; sequence NFREETETDL…AKLRSMMPWI (146 aa). Mg(2+) is bound by residues aspartate 190, glutamate 194, glutamate 226, and glutamate 230. Serine 251 contributes to the substrate binding site.

It belongs to the ketol-acid reductoisomerase family. Mg(2+) serves as cofactor.

The enzyme catalyses (2R)-2,3-dihydroxy-3-methylbutanoate + NADP(+) = (2S)-2-acetolactate + NADPH + H(+). It catalyses the reaction (2R,3R)-2,3-dihydroxy-3-methylpentanoate + NADP(+) = (S)-2-ethyl-2-hydroxy-3-oxobutanoate + NADPH + H(+). It functions in the pathway amino-acid biosynthesis; L-isoleucine biosynthesis; L-isoleucine from 2-oxobutanoate: step 2/4. Its pathway is amino-acid biosynthesis; L-valine biosynthesis; L-valine from pyruvate: step 2/4. Its function is as follows. Involved in the biosynthesis of branched-chain amino acids (BCAA). Catalyzes an alkyl-migration followed by a ketol-acid reduction of (S)-2-acetolactate (S2AL) to yield (R)-2,3-dihydroxy-isovalerate. In the isomerase reaction, S2AL is rearranged via a Mg-dependent methyl migration to produce 3-hydroxy-3-methyl-2-ketobutyrate (HMKB). In the reductase reaction, this 2-ketoacid undergoes a metal-dependent reduction by NADPH to yield (R)-2,3-dihydroxy-isovalerate. This Paraburkholderia phytofirmans (strain DSM 17436 / LMG 22146 / PsJN) (Burkholderia phytofirmans) protein is Ketol-acid reductoisomerase (NADP(+)).